A 245-amino-acid polypeptide reads, in one-letter code: 2,3-bisphosphoglycerate-dependent phosphoglycerate mutase (245 aa).

Substrate contacts are provided by residues 9–16 (RHGESEWN), 22–23 (TG), Arg-61, 88–91 (ERHY), Lys-99, 115–116 (RR), and 181–182 (GN). The active-site Tele-phosphohistidine intermediate is His-10. The active-site Proton donor/acceptor is the Glu-88.

This sequence belongs to the phosphoglycerate mutase family. BPG-dependent PGAM subfamily.

The catalysed reaction is (2R)-2-phosphoglycerate = (2R)-3-phosphoglycerate. The protein operates within carbohydrate degradation; glycolysis; pyruvate from D-glyceraldehyde 3-phosphate: step 3/5. In terms of biological role, catalyzes the interconversion of 2-phosphoglycerate and 3-phosphoglycerate. This is 2,3-bisphosphoglycerate-dependent phosphoglycerate mutase from Nocardia farcinica (strain IFM 10152).